An 824-amino-acid polypeptide reads, in one-letter code: ABC transporter B family member 7 (824 aa).

Positions 41–101 (RNSVKFNLDT…NKNNKNKINN (61 aa)) are disordered. Positions 63–101 (NNNKNNNNNNNNNNNNNNNNNNNNNNNNNNKNNKNKINN) are enriched in low complexity. 6 helical membrane passes run 164 to 184 (IWYF…QLAL), 252 to 272 (WIII…LLFT), 325 to 345 (LSTL…LVFL), 347 to 367 (WKVT…FLVF), 431 to 451 (AFWI…IYGF), and 461 to 481 (ILLL…NGLI). The region spanning 167 to 489 (FVFAFLALSI…LIGSINEIQK (323 aa)) is the ABC transmembrane type-1 domain. The region spanning 521-767 (ISFDNVYFNN…STSFYVTSVL (247 aa)) is the ABC transporter domain. An ATP-binding site is contributed by 570 to 576 (GPSQSKE). The disordered stretch occupies residues 772–813 (NKYNNNNNNNNNNNNNNNNNNNNNNNNNNNNNNNNNNNNINN).

This sequence belongs to the ABC transporter superfamily. ABCB family.

The protein localises to the membrane. This chain is ABC transporter B family member 7 (abcB7), found in Dictyostelium discoideum (Social amoeba).